Here is a 1257-residue protein sequence, read N- to C-terminus: Phosphatidylinositol 3,4,5-trisphosphate 5-phosphatase 2 (1257 aa).

An SH2 domain is found at 21–117 (WYHRDLSRAA…GLVCALLLPV (97 aa)). Over residues 119 to 132 (GEREPDPPDDRDAS) the composition is skewed to basic and acidic residues. Residues 119–181 (GEREPDPPDD…ESTPNGLSTV (63 aa)) are disordered. S132 carries the phosphoserine modification. Pro residues predominate over residues 156–166 (PSSPLPTPETP). Phosphothreonine is present on T165. Residues S241 and S353 each carry the phosphoserine modification. The residue at position 887 (Y887) is a Phosphotyrosine. The residue at position 891 (S891) is a Phosphoserine. Residues 897-986 (TGAKSKVPSV…PPKNSFNNPA (90 aa)) form a disordered region. A compositionally biased stretch (pro residues) spans 939 to 951 (PPPTGRPPAPPRA). Residues 945-950 (PPAPPR) carry the SH3-binding motif. Residues 952-966 (VPREEPLNPRLKSEG) are compositionally biased toward basic and acidic residues. The NPXY motif motif lies at 984–987 (NPAY). Y987 bears the Phosphotyrosine mark. A compositionally biased stretch (low complexity) spans 999-1008 (PLEPPSLARA). The disordered stretch occupies residues 999–1119 (PLEPPSLARA…FLGEVASGDD (121 aa)). Pro residues-rich tracts occupy residues 1049–1060 (LPPPDFPPPPLP) and 1088–1104 (GPPP…PPGT). S1132 bears the Phosphoserine mark. The interval 1134–1196 (VDYAPGPGRS…PQGGRASGLG (63 aa)) is disordered. Residues Y1136 and Y1161 each carry the phosphotyrosine modification. The 63-residue stretch at 1195 to 1257 (LGEAGMGAWL…LLLDTLQLSK (63 aa)) folds into the SAM domain. S1256 is modified (phosphoserine).

This sequence belongs to the inositol 1,4,5-trisphosphate 5-phosphatase family. In terms of assembly, interacts with tyrosine phosphorylated form of SHC1. Interacts with EGFR. Upon stimulation by the EGF signaling pathway, it forms a complex with SHC1 and EGFR. Interacts with cytoskeletal protein SORBS3/vinexin, promoting its localization to the periphery of cells. Forms a complex with filamin (FLNA or FLNB), actin, GPIb (GP1BA or GP1BB) that regulates cortical and submembraneous actin. Interacts with c-Met/MET, when c-Met/MET is phosphorylated on 'Tyr-1356'. Interacts with p130Cas/BCAR1. Interacts with CENTD3/ARAP3 via its SAM domain. Interacts with c-Cbl/CBL and CAP/SORBS1. Interacts with activated EPHA2 receptor. Interacts with receptors FCGR2A. Interacts with FCGR2B. Interacts with tyrosine kinase ABL1. Interacts with tyrosine kinase TEC. Interacts with CSF1R. Interacts (via N-terminus) with SH3YL1 (via SH3 domain). Interacts (via SH2 domain) with tyrosine phosphorylated KLRC1 (via ITIM). Interacts with NEDD9/HEF1. Tyrosine phosphorylated by the members of the SRC family after exposure to a diverse array of extracellular stimuli such as insulin, growth factors such as EGF or PDGF, chemokines, integrin ligands and hypertonic and oxidative stress. May be phosphorylated upon IgG receptor FCGR2B-binding. Phosphorylated at Tyr-987 following cell attachment and spreading. Phosphorylated at Tyr-1161 following EGF signaling pathway stimulation. Widely expressed.

The protein localises to the cytoplasm. It is found in the cytosol. The protein resides in the cytoskeleton. Its subcellular location is the membrane. It localises to the cell projection. The protein localises to the filopodium. It is found in the lamellipodium. The protein resides in the basal cell membrane. Its subcellular location is the nucleus. It localises to the nucleus speckle. The protein localises to the spindle pole. It carries out the reaction a 1,2-diacyl-sn-glycero-3-phospho-(1D-myo-inositol-3,4,5-trisphosphate) + H2O = a 1,2-diacyl-sn-glycero-3-phospho-(1D-myo-inositol-3,4-bisphosphate) + phosphate. The catalysed reaction is 1,2-dioctanoyl-sn-glycero-3-phospho-(1D-myo-inositol-3,4,5-trisphosphate) + H2O = 1,2-dioctanoyl-sn-glycero-3-phospho-(1D-myo-inositol-3,4-bisphosphate) + phosphate. It catalyses the reaction 1,2-dihexadecanoyl-sn-glycero-3-phospho-(1D-myo-inositol-3,4,5-trisphosphate) + H2O = 1,2-dihexadecanoyl-sn-glycero-3-phospho-(1D-myo-inositol-3,4-bisphosphate) + phosphate. Activated upon translocation to the sites of synthesis of PtdIns(3,4,5)P3 in the membrane. Enzymatic activity is enhanced in the presence of phosphatidylserine. In terms of biological role, phosphatidylinositol (PtdIns) phosphatase that specifically hydrolyzes the 5-phosphate of phosphatidylinositol-3,4,5-trisphosphate (PtdIns(3,4,5)P3) to produce PtdIns(3,4)P2, thereby negatively regulating the PI3K (phosphoinositide 3-kinase) pathways. Required for correct mitotic spindle orientation and therefore progression of mitosis. Plays a central role in regulation of PI3K-dependent insulin signaling, although the precise molecular mechanisms and signaling pathways remain unclear. While overexpression reduces both insulin-stimulated MAP kinase and Akt activation, its absence does not affect insulin signaling or GLUT4 trafficking. Confers resistance to dietary obesity. May act by regulating AKT2, but not AKT1, phosphorylation at the plasma membrane. Part of a signaling pathway that regulates actin cytoskeleton remodeling. Required for the maintenance and dynamic remodeling of actin structures as well as in endocytosis, having a major impact on ligand-induced EGFR internalization and degradation. Participates in regulation of cortical and submembraneous actin by hydrolyzing PtdIns(3,4,5)P3 thereby regulating membrane ruffling. Regulates cell adhesion and cell spreading. Required for HGF-mediated lamellipodium formation, cell scattering and spreading. Acts as a negative regulator of EPHA2 receptor endocytosis by inhibiting via PI3K-dependent Rac1 activation. Acts as a regulator of neuritogenesis by regulating PtdIns(3,4,5)P3 level and is required to form an initial protrusive pattern, and later, maintain proper neurite outgrowth. Acts as a negative regulator of the FC-gamma-RIIA receptor (FCGR2A). Mediates signaling from the FC-gamma-RIIB receptor (FCGR2B), playing a central role in terminating signal transduction from activating immune/hematopoietic cell receptor systems. Upon stimulation by EGF, it is recruited by EGFR and dephosphorylates PtdIns(3,4,5)P3. Plays a negative role in regulating the PI3K-PKB pathway, possibly by inhibiting PKB activity. Down-regulates Fc-gamma-R-mediated phagocytosis in macrophages independently of INPP5D/SHIP1. In macrophages, down-regulates NF-kappa-B-dependent gene transcription by regulating macrophage colony-stimulating factor (M-CSF)-induced signaling. Plays a role in the localization of AURKA and NEDD9/HEF1 to the basolateral membrane at interphase in polarized cysts, thereby mediates cell cycle homeostasis, cell polarization and cilia assembly. Additionally promotion of cilia growth is also facilitated by hydrolysis of (PtdIns(3,4,5)P3) to PtdIns(3,4)P2. Promotes formation of apical membrane-initiation sites during the initial stages of lumen formation via Rho family-induced actin filament organization and CTNNB1 localization to cell-cell contacts. May also hydrolyze PtdIns(1,3,4,5)P4, and could thus affect the levels of the higher inositol polyphosphates like InsP6. Involved in endochondral ossification. The protein is Phosphatidylinositol 3,4,5-trisphosphate 5-phosphatase 2 of Mus musculus (Mouse).